The following is a 395-amino-acid chain: Altered inheritance of mitochondria protein 39, mitochondrial (395 aa).

The helical transmembrane segment at 156 to 176 threads the bilayer; that stretch reads QIWSAIFGGIFGVILGYSLIY.

It belongs to the AIM39 family.

The protein localises to the mitochondrion membrane. In Saccharomyces cerevisiae (strain Lalvin EC1118 / Prise de mousse) (Baker's yeast), this protein is Altered inheritance of mitochondria protein 39, mitochondrial (AIM39).